The following is a 341-amino-acid chain: Src kinase-associated phosphoprotein 2 (341 aa).

The segment at 54 to 95 is disordered; it reads FKDRRDEEFPEPDEADTNDGGSLHSEQTDRDDENAYDGVQQS. A compositionally biased stretch (acidic residues) spans 61 to 70; it reads EFPEPDEADT. The region spanning 105 to 208 is the PH domain; that stretch reads AVLKSGYLEK…WVEHIDFLIK (104 aa). Residues 246-265 are disordered; sequence EEDVPQPSKPKVTLVNKPPP. The 62-residue stretch at 279–340 folds into the SH3 domain; the sequence is DYANYFQGLW…PKEYLLELYV (62 aa).

The protein belongs to the SKAP family. Phosphorylated on tyrosines.

It localises to the cytoplasm. May be involved in B-cell and macrophage adhesion processes. May play a role in src signaling pathway. The polypeptide is Src kinase-associated phosphoprotein 2 (skap2) (Danio rerio (Zebrafish)).